Here is a 63-residue protein sequence, read N- to C-terminus: Small ribosomal subunit protein uS14 (63 aa).

Zn(2+) contacts are provided by cysteine 26, cysteine 29, cysteine 42, and cysteine 45.

The protein belongs to the universal ribosomal protein uS14 family. Zinc-binding uS14 subfamily. Part of the 30S ribosomal subunit. Contacts proteins S3 and S10. Zn(2+) serves as cofactor.

In terms of biological role, binds 16S rRNA, required for the assembly of 30S particles and may also be responsible for determining the conformation of the 16S rRNA at the A site. The sequence is that of Small ribosomal subunit protein uS14 from Gloeobacter violaceus (strain ATCC 29082 / PCC 7421).